We begin with the raw amino-acid sequence, 533 residues long: Adenylate kinase 7 (533 aa).

The tract at residues 177 to 426 (PVKICILGPP…EPRNYGLTDE (250 aa)) is adenylate kinase. Residue 187-192 (AVGKSS) coordinates ATP. The NMP stretch occupies residues 207–265 (QLKDVISEAIAKLETIVAPKDIGEGKEEVEEEEEEENVEDAQELLDGIKESMEQNAGQL). AMP contacts are provided by residues 242–265 (ENVE…AGQL), 292–295 (GFPK), and glutamine 299. Residues 347–357 (NLPERIVAGTH) are LID. Arginine 365 contributes to the AMP binding site. Glycine 397 contributes to the ATP binding site. Residues 419-487 (RNYGLTDEEK…EERELLEAQS (69 aa)) are a coiled coil. Residues 489-533 (PLRNYLMTYVMPTLIQGLNECCNVRPEDPVDFLAEYLFKNNPEAQ) are DPY-30.

It in the central section; belongs to the adenylate kinase family. This sequence in the C-terminal section; belongs to the dpy-30 family.

The protein resides in the cytoplasm. It localises to the cytosol. The protein localises to the cell projection. Its subcellular location is the cilium. It is found in the flagellum. It catalyses the reaction AMP + ATP = 2 ADP. It carries out the reaction a 2'-deoxyribonucleoside 5'-diphosphate + ATP = a 2'-deoxyribonucleoside 5'-triphosphate + ADP. The enzyme catalyses a ribonucleoside 5'-diphosphate + ATP = a ribonucleoside 5'-triphosphate + ADP. In terms of biological role, nucleoside monophosphate (NMP) kinase that catalyzes the reversible transfer of the terminal phosphate group between nucleoside triphosphates and monophosphates. Has highest activity toward AMP, and weaker activity toward dAMP, CMP and dCMP. Also displays broad nucleoside diphosphate kinase activity. Involved in maintaining ciliary structure and function. In Macaca fascicularis (Crab-eating macaque), this protein is Adenylate kinase 7 (AK7).